The sequence spans 583 residues: Torsin-1A-interacting protein 1 (583 aa).

The Nuclear segment spans residues 1 to 339; sequence MAGERWRAEG…DESSVKIKWW (339 aa). The segment at 23-208 is disordered; it reads APIREGRRRL…PPLRSPRPDA (186 aa). A Phosphoserine modification is found at Ser-60. Basic and acidic residues-rich tracts occupy residues 70–101 and 115–132; these read FEPR…EVRE and GPQE…RLEQ. Phosphoserine occurs at positions 134, 142, 155, and 157. A compositionally biased stretch (polar residues) spans 166-188; that stretch reads SSQPVTSQTVSKKTVRTPETSVM. A Phosphoserine modification is found at Ser-189. Position 222 is a phosphothreonine (Thr-222). Phosphoserine is present on residues Ser-228, Ser-231, and Ser-242. A Glycyl lysine isopeptide (Lys-Gly) (interchain with G-Cter in SUMO2) cross-link involves residue Lys-309. Position 316 is a phosphoserine (Ser-316). A helical membrane pass occupies residues 340 to 360; it reads LLILVAALAMGIYWFFHTPVV. An interaction with TOR1A region spans residues 356-583; it reads HTPVVETTAV…ENALKAGSCL (228 aa). The stretch at 360–388 forms a coiled coil; it reads VETTAVQEFQNQMKQLQSKYQSQDEKLWK. The Perinuclear space segment spans residues 361-583; sequence ETTAVQEFQN…ENALKAGSCL (223 aa). Asn-399 carries N-linked (GlcNAc...) asparagine glycosylation.

This sequence belongs to the TOR1AIP family. As to quaternary structure, interacts with ATP1B4. Interacts with TOR1A (ATP-bound). Interacts with TOR1B, TOR2A and TOR3A. Interacts with VIM.

The protein resides in the nucleus inner membrane. Its function is as follows. Required for nuclear membrane integrity. Induces TOR1A and TOR1B ATPase activity and is required for their location on the nuclear membrane. Binds to A- and B-type lamins. Possible role in membrane attachment and assembly of the nuclear lamina. The chain is Torsin-1A-interacting protein 1 (Tor1aip1) from Rattus norvegicus (Rat).